The following is a 292-amino-acid chain: 2-(5''-triphosphoribosyl)-3'-dephosphocoenzyme-A synthase (292 aa).

It belongs to the CitG/MdcB family.

The catalysed reaction is 3'-dephospho-CoA + ATP = 2'-(5''-triphospho-alpha-D-ribosyl)-3'-dephospho-CoA + adenine. Functionally, catalyzes the formation of 2-(5''-triphosphoribosyl)-3'-dephosphocoenzyme-A, the precursor of the prosthetic group of the holo-acyl carrier protein (gamma chain) of citrate lyase, from ATP and dephospho-CoA. The polypeptide is 2-(5''-triphosphoribosyl)-3'-dephosphocoenzyme-A synthase (Escherichia coli (strain UTI89 / UPEC)).